The primary structure comprises 412 residues: Zinc finger protein 821 (412 aa).

Residues 26–83 (RQAMMKTDFPGDLGSQRQAIQQLRDQDSSSSDSEGDEEETTQDEVSSHTSEEDGGVVK) are disordered. The segment covering 58-67 (SEGDEEETTQ) has biased composition (acidic residues). C2H2-type zinc fingers lie at residues 116-140 (ELCQCPLCQLDCGSREQLIAHVYQH) and 150-172 (YMCPVCGRALSSPGSLGRHLLIH). The stretch at 257 to 366 (KWALRRQNEP…EKMDMMLRAQ (110 aa)) forms a coiled coil. Positions 278 to 319 (RTAKKSRRDNETPEEREVRRMRDREAKRLQRMQETDEQRARR) are disordered.

The protein belongs to the krueppel C2H2-type zinc-finger protein family.

Its subcellular location is the nucleus. Functionally, may be involved in transcriptional regulation. The polypeptide is Zinc finger protein 821 (ZNF821) (Homo sapiens (Human)).